The chain runs to 540 residues: NADH-quinone oxidoreductase subunit N (540 aa).

Helical transmembrane passes span 24-44, 54-74, 88-108, 158-178, 184-204, 219-239, 263-283, 295-315, 331-351, 357-377, 385-405, 428-448, 462-482, and 505-525; these read LSPM…EAFL, LVLA…LAGT, PTLF…LIIA, APGH…MLLF, LLTM…LCGL, YFLL…LLYG, ALIG…AVPF, PTPI…GAML, PVMW…AVTQ, MLAY…VAAN, MFYL…VTLV, VGGV…TSGF, GAVP…FFYV, and MFTA…GILP.

Belongs to the complex I subunit 2 family. NDH-1 is composed of 14 different subunits. Subunits NuoA, H, J, K, L, M, N constitute the membrane sector of the complex.

It localises to the cell membrane. The catalysed reaction is a quinone + NADH + 5 H(+)(in) = a quinol + NAD(+) + 4 H(+)(out). Its function is as follows. NDH-1 shuttles electrons from NADH, via FMN and iron-sulfur (Fe-S) centers, to quinones in the respiratory chain. The immediate electron acceptor for the enzyme in this species is believed to be a menaquinone. Couples the redox reaction to proton translocation (for every two electrons transferred, four hydrogen ions are translocated across the cytoplasmic membrane), and thus conserves the redox energy in a proton gradient. This is NADH-quinone oxidoreductase subunit N from Rhodococcus opacus (strain B4).